We begin with the raw amino-acid sequence, 371 residues long: 4-hydroxy-3-methylbut-2-en-1-yl diphosphate synthase (flavodoxin) (371 aa).

Positions 270, 273, 305, and 312 each coordinate [4Fe-4S] cluster.

This sequence belongs to the IspG family. The cofactor is [4Fe-4S] cluster.

The enzyme catalyses (2E)-4-hydroxy-3-methylbut-2-enyl diphosphate + oxidized [flavodoxin] + H2O + 2 H(+) = 2-C-methyl-D-erythritol 2,4-cyclic diphosphate + reduced [flavodoxin]. It participates in isoprenoid biosynthesis; isopentenyl diphosphate biosynthesis via DXP pathway; isopentenyl diphosphate from 1-deoxy-D-xylulose 5-phosphate: step 5/6. Functionally, converts 2C-methyl-D-erythritol 2,4-cyclodiphosphate (ME-2,4cPP) into 1-hydroxy-2-methyl-2-(E)-butenyl 4-diphosphate. This Shewanella pealeana (strain ATCC 700345 / ANG-SQ1) protein is 4-hydroxy-3-methylbut-2-en-1-yl diphosphate synthase (flavodoxin).